The sequence spans 446 residues: 5-hydroxytryptamine receptor 7 (446 aa).

At 1 to 84 (MMGVNSSGRP…INYGRAEKVV (84 aa)) the chain is on the extracellular side. 2 N-linked (GlcNAc...) asparagine glycosylation sites follow: asparagine 5 and asparagine 67. Residues 85-109 (IGSILTLITLLTIAGNCLVVISVCF) traverse the membrane as a helical segment. Residues 110 to 119 (VKKLRQPSNY) are Cytoplasmic-facing. Residues 120-141 (LIVSLALADLSVAVAVIPFVSV) traverse the membrane as a helical segment. The Extracellular segment spans residues 142–153 (TDLIGGKWIFGH). The helical transmembrane segment at 154–179 (FFCNVFIAMDVMCCTASIMTLCVISI) threads the bilayer. Cysteine 156 and cysteine 232 are oxidised to a cystine. Aspartate 163 serves as a coordination point for serotonin. The Cytoplasmic portion of the chain corresponds to 180 to 199 (DRYLGITRPLTYPVRQNGKC). The chain crosses the membrane as a helical span at residues 200–220 (MPKMILSVWLLSASITLPPLF). At 221–238 (GWAQNVNDDKVCLISQDF) the chain is on the extracellular side. The helical transmembrane segment at 239-261 (GYTIYSTAVAFYIPMSVMLFMYY) threads the bilayer. Topologically, residues 262 to 327 (RIYKAARKSA…SIFKREQKAA (66 aa)) are cytoplasmic. A helical transmembrane segment spans residues 328–353 (TTLGIIVGAFTVCWLPFFLLSTARPF). The Extracellular portion of the chain corresponds to 354 to 364 (ICGTACSCIPL). A helical transmembrane segment spans residues 365 to 388 (WVERTCLWLGYANSLINPFIYAFF). Over 389–446 (NRDLRTTYRSLLQCQYRNINRKLSAAGMHEALKLAERPERPECVLQNSDYCRKKGHDS) the chain is Cytoplasmic. The S-palmitoyl cysteine moiety is linked to residue cysteine 402.

The protein belongs to the G-protein coupled receptor 1 family.

The protein localises to the cell membrane. Its function is as follows. G-protein coupled receptor for 5-hydroxytryptamine (serotonin), a biogenic hormone that functions as a neurotransmitter, a hormone and a mitogen. Ligand binding causes a conformation change that triggers signaling via guanine nucleotide-binding proteins (G proteins) and modulates the activity of downstream effectors. HTR7 is coupled to G(s) G alpha proteins and mediates activation of adenylate cyclase activity. The protein is 5-hydroxytryptamine receptor 7 (HTR7) of Cavia porcellus (Guinea pig).